Consider the following 371-residue polypeptide: Ecto-ADP-ribosyltransferase 3 (371 aa).

An N-terminal signal peptide occupies residues 1 to 26 (MKMGHFEMVTTLLAAAVLMDIFQVKA). A disulfide bridge connects residues Cys-43 and Cys-255. Residues 64–250 (ALLRMVWDNA…LVLQSINSTC (187 aa)) enclose the TR mART core domain. Residues Tyr-101 and Asn-182 each contribute to the NAD(+) site. Residues 306–346 (VLQTEENPLLPDEKPDRSRGKANNPTPGLVPGPKSHPSASS) are disordered. Ser-345 carries the GPI-anchor amidated serine lipid modification. A propeptide spans 346–371 (SGNTLLPSVMASTILLVASAVNFIEL) (removed in mature form).

The protein belongs to the Arg-specific ADP-ribosyltransferase family.

It localises to the cell membrane. It catalyses the reaction L-arginyl-[protein] + NAD(+) = N(omega)-(ADP-D-ribosyl)-L-arginyl-[protein] + nicotinamide + H(+). This is Ecto-ADP-ribosyltransferase 3 (Art3) from Mus musculus (Mouse).